The chain runs to 400 residues: Dual specificity mitogen-activated protein kinase kinase 2 (400 aa).

N-acetylmethionine is present on methionine 1. Serine 23 bears the Phosphoserine mark. One can recognise a Protein kinase domain in the interval 72-369 (FERISELGAG…LKLLTNHAFI (298 aa)). Residues 78 to 86 (LGAGNGGVV) and lysine 101 contribute to the ATP site. Aspartate 194 acts as the Proton acceptor in catalysis. A phosphoserine; by RAF mark is found at serine 222 and serine 226. The interval 282–310 (PVVDGADGEPHSVSPRPRPPGRPISGHGM) is disordered. 3 positions are modified to phosphoserine: serine 293, serine 295, and serine 306. A phosphothreonine mark is found at threonine 394 and threonine 396.

It belongs to the protein kinase superfamily. STE Ser/Thr protein kinase family. MAP kinase kinase subfamily. In terms of assembly, interacts with MORG1. Interacts with SGK1. Interacts with KSR1. Interacts with KSR1 and BRAF; the interaction with KSR1 mediates KSR1-BRAF dimerization. Interacts with GLS. It depends on Mg(2+) as a cofactor. In terms of processing, MAPKK is itself dependent on Ser/Thr phosphorylation for activity catalyzed by MAP kinase kinase kinases (RAF or MEKK1). Phosphorylated by MAP2K1/MEK1. Expressed abundantly in the adult brain and muscle.

The protein resides in the cytoplasm. It is found in the membrane. The catalysed reaction is L-seryl-[protein] + ATP = O-phospho-L-seryl-[protein] + ADP + H(+). The enzyme catalyses L-threonyl-[protein] + ATP = O-phospho-L-threonyl-[protein] + ADP + H(+). It carries out the reaction L-tyrosyl-[protein] + ATP = O-phospho-L-tyrosyl-[protein] + ADP + H(+). Catalyzes the concomitant phosphorylation of a threonine and a tyrosine residue in a Thr-Glu-Tyr sequence located in MAP kinases. Activates the ERK1 and ERK2 MAP kinases. Activates BRAF in a KSR1 or KSR2-dependent manner; by binding to KSR1 or KSR2 releases the inhibitory intramolecular interaction between KSR1 or KSR2 protein kinase and N-terminal domains which promotes KSR1 or KSR2-BRAF dimerization and BRAF activation. In Rattus norvegicus (Rat), this protein is Dual specificity mitogen-activated protein kinase kinase 2 (Map2k2).